Consider the following 280-residue polypeptide: Beta-lactamase OXA-58 (280 aa).

The first 18 residues, 1-18 (MKLLKILSLVCLSISIGA), serve as a signal peptide directing secretion. Cys-19 carries the N-palmitoyl cysteine lipid modification. Cys-19 carries the S-diacylglycerol cysteine lipid modification. Residue Ser-83 is the Acyl-ester intermediate of the active site. Residues Ser-83, Lys-86, Ser-130, Ser-221, Trp-223, and Arg-263 each contribute to the a beta-lactam site. At Lys-86 the chain carries N6-carboxylysine.

It belongs to the class-D beta-lactamase family. In terms of assembly, monomer. Dimer. In terms of processing, carboxylated on the epsilon-amino group of a lysine, with the resulting carbamate functional group serving as a general base. Probably N-carboxylated at Lys-86 at neutral pH in vivo and undergoes complete N-decarboxylation, at pH 4.1, in vitro. N-carboxylation at Lys-86 probably increases catalytic activity under physiological conditions.

The protein resides in the cell membrane. The catalysed reaction is a beta-lactam + H2O = a substituted beta-amino acid. Its activity is regulated as follows. Activated approximately 3-fold by the presence of 0.1M NaHCO3. Its function is as follows. Class D beta-lactamase which confers resistance to the beta-lactam antibiotics, including penicillins and oxacillin, and moderate resistance to carbapenems such as imipenem; in the DH10B strain of E.coli. Acts via hydrolysis of the beta-lactam ring. Has benzylpenicillin-, oxacillin-, cephalothin- and imipenem-hydrolyzing activities. This is Beta-lactamase OXA-58 from Acinetobacter baumannii.